The chain runs to 396 residues: Elongation factor Tu (396 aa).

Residues 11–205 (KPHVNIGTIG…TVDEYVPTPE (195 aa)) enclose the tr-type G domain. The tract at residues 20–27 (GHVDHGKT) is G1. A GTP-binding site is contributed by 20–27 (GHVDHGKT). T27 lines the Mg(2+) pocket. Residues 61-65 (GITIN) are G2. The interval 82–85 (DAPG) is G3. Residues 82–86 (DAPGH) and 137–140 (NKTD) each bind GTP. The tract at residues 137–140 (NKTD) is G4. Residues 175-177 (SAL) form a G5 region.

Belongs to the TRAFAC class translation factor GTPase superfamily. Classic translation factor GTPase family. EF-Tu/EF-1A subfamily. Monomer.

Its subcellular location is the cytoplasm. It catalyses the reaction GTP + H2O = GDP + phosphate + H(+). In terms of biological role, GTP hydrolase that promotes the GTP-dependent binding of aminoacyl-tRNA to the A-site of ribosomes during protein biosynthesis. The polypeptide is Elongation factor Tu (Latilactobacillus sakei subsp. sakei (strain 23K) (Lactobacillus sakei subsp. sakei)).